Here is a 351-residue protein sequence, read N- to C-terminus: SH3 domain-containing protein 3 (351 aa).

Coiled coils occupy residues 1-21 (MDAF…QQLA) and 193-213 (LQLA…LGKE). Residues 31–267 (YESSDVMVID…MVTEKQHKES (237 aa)) form the BAR domain. The SH3 domain maps to 281-340 (TSYFLAEVIHPFSAASEKELDLDKGDYIVVRKVSQTGWAEGECKGKAGWFPMAYIEKRQR).

Interacts with FREE1. Interacts (via SH3 domain) with DRP2A/ADL6. Binds to SH3P2. In terms of tissue distribution, detected in all tissues except seedlings.

It localises to the cytoplasmic vesicle. It is found in the clathrin-coated vesicle. In terms of biological role, may be involved in the recruitment of DRP2A to the accessory protein complex and in the negative regulation of its GTPase activity. The chain is SH3 domain-containing protein 3 from Arabidopsis thaliana (Mouse-ear cress).